Here is a 337-residue protein sequence, read N- to C-terminus: MLRVLTGDRPTGRLHLGHYAGSLGTRLRIQSEHECFFIIADLHTLTTRHGRAQLAELPALVRELVLDYLACGIDAQRAVIYLQSAVPEVTELAFIFANLVTVPRLQRIPSLKEMAQAANLSELPFGLLGYPVLQAADILLARAHLVPVGKDNESHVELTREVAKRFNRLYGEVFPLPRALLSDCATLVGTDGQAKMSKSLGNAIFLSDDEETVRRKVRAMYTDPARTRADIPGRVEGNPVFAYHDAFNPNTDEVAHFKERYRAGRVGDTEVKDALARALNTFLEPIRARRAQLEQQPAYLARVLEEGCARMRAEARKTMQRVKEAMGLSARPLVHLP.

ATP contacts are provided by residues 9 to 11 (RPT) and 17 to 18 (GH). A 'HIGH' region motif is present at residues 10-18 (PTGRLHLGH). Position 137 (aspartate 137) interacts with L-tryptophan. ATP-binding positions include 149 to 151 (GKD), leucine 187, and 195 to 199 (KMSKS). A 'KMSKS' region motif is present at residues 195 to 199 (KMSKS).

This sequence belongs to the class-I aminoacyl-tRNA synthetase family. In terms of assembly, homodimer.

The protein localises to the cytoplasm. It catalyses the reaction tRNA(Trp) + L-tryptophan + ATP = L-tryptophyl-tRNA(Trp) + AMP + diphosphate + H(+). Its function is as follows. Catalyzes the attachment of tryptophan to tRNA(Trp). In Treponema pallidum (strain Nichols), this protein is Tryptophan--tRNA ligase.